We begin with the raw amino-acid sequence, 544 residues long: Chaperonin GroEL 1 (544 aa).

ATP-binding positions include 29-32, 86-90, G413, 479-481, and D495; these read TLGP, DGTTT, and NAA.

The protein belongs to the chaperonin (HSP60) family. In terms of assembly, forms a cylinder of 14 subunits composed of two heptameric rings stacked back-to-back. Interacts with the co-chaperonin GroES.

The protein localises to the cytoplasm. The enzyme catalyses ATP + H2O + a folded polypeptide = ADP + phosphate + an unfolded polypeptide.. Its function is as follows. Together with its co-chaperonin GroES, plays an essential role in assisting protein folding. The GroEL-GroES system forms a nano-cage that allows encapsulation of the non-native substrate proteins and provides a physical environment optimized to promote and accelerate protein folding. This is Chaperonin GroEL 1 from Synechococcus sp. (strain CC9902).